A 259-amino-acid chain; its full sequence is 4-hydroxy-tetrahydrodipicolinate reductase (259 aa).

NAD(+) contacts are provided by residues 8-13 (GFKGRM), 93-95 (GTT), and 119-122 (APNF). Histidine 149 (proton donor/acceptor) is an active-site residue. Histidine 150 contacts (S)-2,3,4,5-tetrahydrodipicolinate. The active-site Proton donor is the lysine 153. Position 159 to 160 (159 to 160 (GT)) interacts with (S)-2,3,4,5-tetrahydrodipicolinate.

It belongs to the DapB family.

Its subcellular location is the cytoplasm. It catalyses the reaction (S)-2,3,4,5-tetrahydrodipicolinate + NAD(+) + H2O = (2S,4S)-4-hydroxy-2,3,4,5-tetrahydrodipicolinate + NADH + H(+). It carries out the reaction (S)-2,3,4,5-tetrahydrodipicolinate + NADP(+) + H2O = (2S,4S)-4-hydroxy-2,3,4,5-tetrahydrodipicolinate + NADPH + H(+). Its pathway is amino-acid biosynthesis; L-lysine biosynthesis via DAP pathway; (S)-tetrahydrodipicolinate from L-aspartate: step 4/4. Functionally, catalyzes the conversion of 4-hydroxy-tetrahydrodipicolinate (HTPA) to tetrahydrodipicolinate. The chain is 4-hydroxy-tetrahydrodipicolinate reductase from Enterococcus faecalis (strain ATCC 700802 / V583).